We begin with the raw amino-acid sequence, 291 residues long: Elongation factor Ts (291 aa).

The tract at residues 78–81 is involved in Mg(2+) ion dislocation from EF-Tu; that stretch reads TDFV.

It belongs to the EF-Ts family.

It localises to the cytoplasm. Its function is as follows. Associates with the EF-Tu.GDP complex and induces the exchange of GDP to GTP. It remains bound to the aminoacyl-tRNA.EF-Tu.GTP complex up to the GTP hydrolysis stage on the ribosome. The protein is Elongation factor Ts of Ureaplasma urealyticum serovar 10 (strain ATCC 33699 / Western).